The chain runs to 288 residues: Carbon monoxide dehydrogenase medium chain (288 aa).

The 177-residue stretch at 1 to 177 (MIPGSFDYHR…TAIRIPVPPT (177 aa)) folds into the FAD-binding PCMH-type domain. FAD contacts are provided by residues 32-36 (AGGHS) and 111-115 (TIGGN).

Dimer of heterotrimers. Each heterotrimer consists of a large, a medium and a small subunit. Requires FAD as cofactor.

It carries out the reaction CO + a quinone + H2O = a quinol + CO2. In terms of biological role, catalyzes the oxidation of carbon monoxide to carbon dioxide. The protein is Carbon monoxide dehydrogenase medium chain (coxM) of Afipia carboxidovorans (strain ATCC 49405 / DSM 1227 / KCTC 32145 / OM5) (Oligotropha carboxidovorans).